The primary structure comprises 321 residues: Transaldolase (321 aa).

The Schiff-base intermediate with substrate role is filled by Lys132.

The protein belongs to the transaldolase family. Type 1 subfamily. In terms of assembly, homodimer.

It localises to the cytoplasm. It catalyses the reaction D-sedoheptulose 7-phosphate + D-glyceraldehyde 3-phosphate = D-erythrose 4-phosphate + beta-D-fructose 6-phosphate. It functions in the pathway carbohydrate degradation; pentose phosphate pathway; D-glyceraldehyde 3-phosphate and beta-D-fructose 6-phosphate from D-ribose 5-phosphate and D-xylulose 5-phosphate (non-oxidative stage): step 2/3. In terms of biological role, transaldolase is important for the balance of metabolites in the pentose-phosphate pathway. The chain is Transaldolase from Rhizobium etli (strain CIAT 652).